The primary structure comprises 959 residues: Isoleucine--tRNA ligase (959 aa).

The 'HIGH' region motif lies at 60 to 70; sequence PYANGSLHMGH. E569 lines the L-isoleucyl-5'-AMP pocket. Residues 610 to 614 carry the 'KMSKS' region motif; it reads KMSKS. An ATP-binding site is contributed by K613. 4 residues coordinate Zn(2+): C928, C931, C948, and C951.

This sequence belongs to the class-I aminoacyl-tRNA synthetase family. IleS type 1 subfamily. In terms of assembly, monomer. It depends on Zn(2+) as a cofactor.

Its subcellular location is the cytoplasm. The enzyme catalyses tRNA(Ile) + L-isoleucine + ATP = L-isoleucyl-tRNA(Ile) + AMP + diphosphate. Functionally, catalyzes the attachment of isoleucine to tRNA(Ile). As IleRS can inadvertently accommodate and process structurally similar amino acids such as valine, to avoid such errors it has two additional distinct tRNA(Ile)-dependent editing activities. One activity is designated as 'pretransfer' editing and involves the hydrolysis of activated Val-AMP. The other activity is designated 'posttransfer' editing and involves deacylation of mischarged Val-tRNA(Ile). In Crocosphaera subtropica (strain ATCC 51142 / BH68) (Cyanothece sp. (strain ATCC 51142)), this protein is Isoleucine--tRNA ligase.